A 4194-amino-acid polypeptide reads, in one-letter code: Hybrid PKS-NRPS synthetase pydA (4194 aa).

In terms of domain architecture, Ketosynthase family 3 (KS3) spans 14 to 450 (REPIAVVGSG…GTNAHAIVEN (437 aa)). Residues C187, H326, and H370 each act as for beta-ketoacyl synthase activity in the active site. The 323-residue stretch at 565-887 (VFTGQGAQWA…QRGKDDVQAF (323 aa)) folds into the Malonyl-CoA:ACP transacylase (MAT) domain. An N-terminal hotdog fold region spans residues 953–1088 (HPLLGTRTTD…GRVIVITGEA (136 aa)). The region spanning 953-1257 (HPLLGTRTTD…VVSFSEPTAE (305 aa)) is the PKS/mFAS DH domain. H985 functions as the Proton acceptor; for dehydratase activity in the catalytic mechanism. The tract at residues 1103 to 1257 (LVDIPEDRFY…VVSFSEPTAE (155 aa)) is C-terminal hotdog fold. Catalysis depends on D1163, which acts as the Proton donor; for dehydratase activity. Residues 1302–1596 (YMRQLASLFP…FSGVDSTTHE (295 aa)) form a methyltransferase (cMeT) domain region. The Ketoreductase (KR) domain maps to 2141-2314 (TYVFFGLTSD…AGSILHIGAV (174 aa)). A Carrier 1 domain is found at 2421 to 2505 (TTAEEALEIV…ELVEFAVENM (85 aa)). An O-(pantetheine 4'-phosphoryl)serine modification is found at S2465. The interval 2512–2583 (NMSDSLNAVP…ERDSSTASLE (72 aa)) is disordered. The span at 2526–2547 (APVIPASPPSGSVSSAPSSDPP) shows a compositional bias: low complexity. Positions 2550–2565 (TAETSQHLSESSSKTS) are enriched in polar residues. The segment covering 2566–2577 (QPDEKQSEERDS) has biased composition (basic and acidic residues). The interval 2591–3023 (EKVLPVSPGQ…QILKDVSLFT (433 aa)) is condensation. The interval 3056–3467 (ANPPQEIALR…RIEGDTQIKL (412 aa)) is adenylation. In terms of domain architecture, Carrier 2 spans 3580–3660 (TQLTEAESEL…AMAAVIQDLS (81 aa)). S3620 carries the post-translational modification O-(pantetheine 4'-phosphoryl)serine. Residues 3701 to 3920 (ITGATGFLGK…VDLISVERAA (220 aa)) enclose the Thioester reductase (TE) domain. Disordered regions lie at residues 4031 to 4110 (RRDK…DEQI) and 4163 to 4194 (KGEY…EPDD). Residues 4057–4072 (RGRDVSPRHPALDHPD) are compositionally biased toward basic and acidic residues. Acidic residues predominate over residues 4174–4183 (EEAEEAEWQC). Residues 4184–4194 (DEGHGDGEPDD) show a composition bias toward basic and acidic residues.

This sequence in the C-terminal section; belongs to the NRP synthetase family. The cofactor is pantetheine 4'-phosphate.

Its pathway is mycotoxin biosynthesis. In terms of biological role, hybrid PKS-NRPS synthetase; part of the gene cluster that mediates the biosynthesis of pyrrocidines, fungal natural products containing a macrocyclic para-cyclophane connected to a decahydrofluorene ring system that show potent antibiotic activities toward Gram-negative bacteria. Within the pathway, the PKS-NRPS pydA, with the help of the trans-enoyl reductase pydC, synthesize the polyketide-tyrosyl acyl thioester product which can be reductively off-loaded by the terminal reductase (R) domain in pydA. The PKS module of pydA acts in combination with the trans-acting enoyl reductase pydC to produce a methylated polyketide attached to the ACP domain. In parallel, the adenylation (A) domain of the NRPS module activated L-tyrosine, which is then transferred to the ACP domain. The condensation (C) domain subsequently link this group to the polyketide chain, forming an enzyme-bound amide. The alpha/beta hydrolase pydG is then required to catalyze the subsequent Knoevenagel condensation that affords the 3-pyrrolin-2-one ring, whereas the four proteins pydB, pydE, pydX and pydZ then function synergistically to form the cyclophane. PydB and the membrane-bound pydX and pydZ are lipid-binding proteins that can sequester and mold the pdyG product into the inverse S-shape. Binding of the medium chain reductase pydE to the complex would trigger the cascade oxidative cyclization. PydY is involved in the Diels-Alder cycloaddition that forms the decahydrofluorene core. Additional non-enzymatic hydroxylation yields pyrrocidine A2 which can be further reduced into pyrrocidine B by an endogenous reductase. This chain is Hybrid PKS-NRPS synthetase pydA, found in Acremonium sp.